A 193-amino-acid polypeptide reads, in one-letter code: Ribonuclease HII (193 aa).

Residues 15 to 193 (YIVAGVDEAG…SYHRKSFKFC (179 aa)) enclose the RNase H type-2 domain. A divalent metal cation is bound by residues Asp21, Glu22, and Asp112.

This sequence belongs to the RNase HII family. Mn(2+) serves as cofactor. The cofactor is Mg(2+).

It localises to the cytoplasm. The enzyme catalyses Endonucleolytic cleavage to 5'-phosphomonoester.. Endonuclease that specifically degrades the RNA of RNA-DNA hybrids. In Rickettsia typhi (strain ATCC VR-144 / Wilmington), this protein is Ribonuclease HII.